The chain runs to 532 residues: Spore coat protein SP85 (532 aa).

The signal sequence occupies residues 1–19 (MRLLSVLLIGFLCLAGTYA). An N-linked (GlcNAc...) asparagine glycan is attached at N47. The tract at residues 197–265 (TQSPTQPPTQ…PTQPPTQPPV (69 aa)) is disordered. Positions 201 to 263 (TQPPTQPPTY…YPPTQPPTQP (63 aa)) are enriched in pro residues. In terms of domain architecture, Follistatin-like 1 spans 267 to 289 (DCSTLECPEGFHCEIVNNRRTCV). The interval 297–320 (THPPTQSPTYPPTQPPTQPPTYPP) is disordered. Follistatin-like domains lie at 335-359 (SCDNVRCPRGYHCECNHWENVARCV), 400-423 (TCDQVRCPRKHHCECNRKGQVFCV), and 430-452 (TCKQVGCPENHECVSRRGELHCV).

Binds to cotE. In terms of processing, O-glycosylated.

It localises to the spore wall. Its function is as follows. Required for incorporation of cotE into the spore coat and for the formation of the outer layer. Has a cross-bridging function between cellulose and other coat proteins. The polypeptide is Spore coat protein SP85 (pspB) (Dictyostelium discoideum (Social amoeba)).